The primary structure comprises 235 residues: Iron-sulfur cluster co-chaperone protein HscB (235 aa).

Residues Cys-41, Cys-44, Cys-58, and Cys-61 each contribute to the a divalent metal cation site. The region spanning Asp-72 to Leu-144 is the J domain.

The protein belongs to the HscB family. In terms of assembly, interacts with ISCU and HSPA9 to form an iron-sulfur transfer complex. Interacts with SDHAF1 (via the first LYR motif); the interaction recruits the iron-sulfur transfer complex composed of HSC20, HSPA9 and ISCU and mediates the incorporation of iron-sulfur clusters into SDHB which also interacts with HSC20. Interacts with the cytoplasmic form of ISCU and with CIA complex member CIAO1 (via LYR motif). As to quaternary structure, homodimer. Interacts with ISCU (cytoplasmic form); this interaction stabilizes the (Fe-S) clusters on ISCU. Interacts with the CIA complex member CIAO1 (via LYR motif). Expressed in lung, brain, stomach, spleen, ovary, testis, liver, muscle and heart.

The protein resides in the cytoplasm. Its subcellular location is the mitochondrion. Its pathway is cofactor biosynthesis; iron-sulfur cluster biosynthesis. Functionally, acts as a co-chaperone in iron-sulfur cluster assembly in mitochondria. Required for incorporation of iron-sulfur clusters into SDHB, the iron-sulfur protein subunit of succinate dehydrogenase that is involved in complex II of the mitochondrial electron transport chain. Recruited to SDHB by interaction with SDHAF1 which first binds SDHB and then recruits the iron-sulfur transfer complex formed by HSC20, HSPA9 and ISCU through direct binding to HSC20. Plays an essential role in hematopoiesis. Its function is as follows. Acts as a co-chaperone in iron-sulfur cluster assembly in the cytoplasm. Also mediates complex formation between components of the cytosolic iron-sulfur biogenesis pathway and the CIA targeting complex composed of CIAO1, DIPK1B/FAM69B and MMS19 by binding directly to the scaffold protein ISCU and to CIAO1. This facilitates iron-sulfur cluster insertion into a number of cytoplasmic and nuclear proteins including POLD1, ELP3, DPYD and PPAT. This Homo sapiens (Human) protein is Iron-sulfur cluster co-chaperone protein HscB.